A 307-amino-acid chain; its full sequence is Protein TIPIN homolog (307 aa).

Disordered stretches follow at residues 1–50 (MASL…SQDA) and 252–279 (ASMD…LSNE). Positions 262-271 (PLPPSQPPTP) are enriched in pro residues.

The protein belongs to the CSM3 family.

It is found in the cytoplasm. It localises to the nucleus. Its function is as follows. Required for normal progression of S-phase. Important for cell survival after DNA damage or replication stress. The protein is Protein TIPIN homolog of Drosophila melanogaster (Fruit fly).